Here is a 440-residue protein sequence, read N- to C-terminus: Cytochrome c biogenesis protein Ccs1 (440 aa).

3 helical membrane passes run 19 to 39 (LRLA…GTFI), 78 to 98 (NIWF…CTYT), and 164 to 184 (VGPI…ACGA).

Belongs to the Ccs1/CcsB family. As to quaternary structure, may interact with CcsA.

The protein resides in the plastid. The protein localises to the chloroplast thylakoid membrane. In terms of biological role, required during biogenesis of c-type cytochromes (cytochrome c6 and cytochrome f) at the step of heme attachment. This Emiliania huxleyi (Coccolithophore) protein is Cytochrome c biogenesis protein Ccs1.